Here is a 251-residue protein sequence, read N- to C-terminus: Tryptophan synthase alpha chain (251 aa).

Residues Glu-46 and Asp-57 each act as proton acceptor in the active site.

The protein belongs to the TrpA family. As to quaternary structure, tetramer of two alpha and two beta chains.

It carries out the reaction (1S,2R)-1-C-(indol-3-yl)glycerol 3-phosphate + L-serine = D-glyceraldehyde 3-phosphate + L-tryptophan + H2O. It functions in the pathway amino-acid biosynthesis; L-tryptophan biosynthesis; L-tryptophan from chorismate: step 5/5. The alpha subunit is responsible for the aldol cleavage of indoleglycerol phosphate to indole and glyceraldehyde 3-phosphate. This chain is Tryptophan synthase alpha chain, found in Karelsulcia muelleri (strain GWSS) (Sulcia muelleri).